The following is a 291-amino-acid chain: Undecaprenyl-diphosphatase (291 aa).

8 helical membrane passes run 1–21 (MFII…LTEF), 48–68 (SAFT…AWVF), 102–122 (LHVL…DDFI), 126–146 (LFSV…MIIA), 162–182 (ISYF…WPGF), 203–223 (SDFT…LSLL), 231–251 (IADI…GLIA), and 267–287 (FAIY…GFGI).

Belongs to the UppP family.

The protein localises to the cell membrane. It carries out the reaction di-trans,octa-cis-undecaprenyl diphosphate + H2O = di-trans,octa-cis-undecaprenyl phosphate + phosphate + H(+). Functionally, catalyzes the dephosphorylation of undecaprenyl diphosphate (UPP). Confers resistance to bacitracin. This Staphylococcus aureus (strain MRSA252) protein is Undecaprenyl-diphosphatase.